Here is a 352-residue protein sequence, read N- to C-terminus: Histidine protein kinase SaeS (352 aa).

A run of 2 helical transmembrane segments spans residues 9 to 29 (QIII…VIAY) and 41 to 61 (TLAI…SIFI). Residues 130 to 349 (NLAHDLKTPL…TMTLTLKKFQ (220 aa)) form the Histidine kinase domain. Residue His-133 is modified to Phosphohistidine; by autocatalysis.

In terms of processing, autophosphorylated.

Its subcellular location is the cell membrane. The catalysed reaction is ATP + protein L-histidine = ADP + protein N-phospho-L-histidine.. Its function is as follows. Member of the two-component regulatory system SaeR/SaeS. Probably functions as a membrane-associated protein kinase that upon sensing the appropriate signal, autophosphorylates and in turn activates the cytosolic response regulator SaeR. The polypeptide is Histidine protein kinase SaeS (saeS) (Staphylococcus epidermidis (strain ATCC 35984 / DSM 28319 / BCRC 17069 / CCUG 31568 / BM 3577 / RP62A)).